We begin with the raw amino-acid sequence, 498 residues long: Serine hydroxymethyltransferase, mitochondrial (498 aa).

K273 carries the post-translational modification N6-(pyridoxal phosphate)lysine.

This sequence belongs to the SHMT family. As to quaternary structure, homotetramer. It depends on pyridoxal 5'-phosphate as a cofactor.

The protein resides in the mitochondrion. It catalyses the reaction (6R)-5,10-methylene-5,6,7,8-tetrahydrofolate + glycine + H2O = (6S)-5,6,7,8-tetrahydrofolate + L-serine. It functions in the pathway one-carbon metabolism; tetrahydrofolate interconversion. Its function is as follows. Interconversion of serine and glycine. The chain is Serine hydroxymethyltransferase, mitochondrial (SHM1) from Kluyveromyces lactis (strain ATCC 8585 / CBS 2359 / DSM 70799 / NBRC 1267 / NRRL Y-1140 / WM37) (Yeast).